Reading from the N-terminus, the 380-residue chain is Erythronate-4-phosphate dehydrogenase (380 aa).

Residues serine 45 and threonine 66 each coordinate substrate. Residues aspartate 146, threonine 174, 205 to 207 (ASR), and aspartate 231 each bind NAD(+). The active site involves arginine 207. The active site involves glutamate 236. Histidine 253 serves as the catalytic Proton donor. An NAD(+)-binding site is contributed by glycine 256. Tyrosine 257 contributes to the substrate binding site.

This sequence belongs to the D-isomer specific 2-hydroxyacid dehydrogenase family. PdxB subfamily. In terms of assembly, homodimer.

It localises to the cytoplasm. The catalysed reaction is 4-phospho-D-erythronate + NAD(+) = (R)-3-hydroxy-2-oxo-4-phosphooxybutanoate + NADH + H(+). It functions in the pathway cofactor biosynthesis; pyridoxine 5'-phosphate biosynthesis; pyridoxine 5'-phosphate from D-erythrose 4-phosphate: step 2/5. Its function is as follows. Catalyzes the oxidation of erythronate-4-phosphate to 3-hydroxy-2-oxo-4-phosphonooxybutanoate. The sequence is that of Erythronate-4-phosphate dehydrogenase from Pseudomonas putida (strain ATCC 700007 / DSM 6899 / JCM 31910 / BCRC 17059 / LMG 24140 / F1).